The chain runs to 242 residues: Uridylate kinase (242 aa).

11 to 14 is an ATP binding site; it reads KLSG. Residue Gly53 participates in UMP binding. ATP-binding residues include Gly54 and Arg58. UMP-binding positions include Asp73 and 134–141; that span reads SGNPFFTT. 3 residues coordinate ATP: Thr161, Tyr167, and Asp170.

Belongs to the UMP kinase family. Homohexamer.

The protein resides in the cytoplasm. It catalyses the reaction UMP + ATP = UDP + ADP. It participates in pyrimidine metabolism; CTP biosynthesis via de novo pathway; UDP from UMP (UMPK route): step 1/1. Its activity is regulated as follows. Inhibited by UTP. Catalyzes the reversible phosphorylation of UMP to UDP. The polypeptide is Uridylate kinase (Thermosynechococcus vestitus (strain NIES-2133 / IAM M-273 / BP-1)).